The primary structure comprises 638 residues: Keratin, type II cytoskeletal 2 oral (638 aa).

The tract at residues 1–182 (MNRQVCKKSF…DPQIGQVKAQ (182 aa)) is head. Arg85 and Arg110 each carry omega-N-methylarginine. Positions 183–218 (EREQIKTLNNKFASFIDKVRFLEQQNKVLETKWELL) are coil 1A. The region spanning 183 to 496 (EREQIKTLNN…KLLEGEECRM (314 aa)) is the IF rod domain. Residues 219–237 (QQQTTGSGPSSLEPCFESY) are linker 1. The interval 238–329 (ISFLCKQLDS…TLYEMELSQM (92 aa)) is coil 1B. Residues 330 to 353 (QSHASDTSVVLSMDNNRCLDLGSI) are linker 12. Residues 354-492 (IAEVRAQYEE…ATYRKLLEGE (139 aa)) form a coil 2 region. The tract at residues 493 to 638 (ECRMSGECQS…TSSSQHSSTK (146 aa)) is tail. Positions 532–638 (SGSGGYKGGS…TSSSQHSSTK (107 aa)) are disordered. Positions 540-549 (GSSSSSSSGY) are enriched in low complexity. The segment covering 550 to 572 (GVSGGSGSGYGGVSSGSTGGRGS) has biased composition (gly residues). Over residues 573–583 (SGSYQSSSSGS) the composition is skewed to low complexity. The residue at position 584 (Arg584) is an Omega-N-methylarginine. Over residues 590–608 (SISVSHSGMGSSSGSIQTS) the composition is skewed to low complexity. Residues 609–620 (GGSGYKSGGGGS) show a composition bias toward gly residues. Over residues 626–638 (SQTTSSSQHSSTK) the composition is skewed to low complexity.

This sequence belongs to the intermediate filament family. In terms of assembly, heterotetramer of two type I and two type II keratins.

Functionally, probably contributes to terminal cornification. The protein is Keratin, type II cytoskeletal 2 oral (KRT76) of Homo sapiens (Human).